Consider the following 162-residue polypeptide: NADPH-dependent 7-cyano-7-deazaguanine reductase (162 aa).

The active-site Thioimide intermediate is Cys-53. The active-site Proton donor is the Asp-60. Residues 75–77 (VES) and 94–95 (HE) contribute to the substrate site.

The protein belongs to the GTP cyclohydrolase I family. QueF type 1 subfamily.

Its subcellular location is the cytoplasm. It catalyses the reaction 7-aminomethyl-7-carbaguanine + 2 NADP(+) = 7-cyano-7-deazaguanine + 2 NADPH + 3 H(+). Its pathway is tRNA modification; tRNA-queuosine biosynthesis. Functionally, catalyzes the NADPH-dependent reduction of 7-cyano-7-deazaguanine (preQ0) to 7-aminomethyl-7-deazaguanine (preQ1). The sequence is that of NADPH-dependent 7-cyano-7-deazaguanine reductase from Exiguobacterium sibiricum (strain DSM 17290 / CCUG 55495 / CIP 109462 / JCM 13490 / 255-15).